A 237-amino-acid polypeptide reads, in one-letter code: Large ribosomal subunit protein uL1 (237 aa).

It belongs to the universal ribosomal protein uL1 family. In terms of assembly, part of the 50S ribosomal subunit.

Binds directly to 23S rRNA. The L1 stalk is quite mobile in the ribosome, and is involved in E site tRNA release. In terms of biological role, protein L1 is also a translational repressor protein, it controls the translation of the L11 operon by binding to its mRNA. The protein is Large ribosomal subunit protein uL1 of Nocardia farcinica (strain IFM 10152).